A 231-amino-acid chain; its full sequence is Cytidylate kinase (231 aa).

Residue 18–26 coordinates ATP; sequence GPSGTGKSS.

Belongs to the cytidylate kinase family. Type 1 subfamily.

Its subcellular location is the cytoplasm. The enzyme catalyses CMP + ATP = CDP + ADP. It catalyses the reaction dCMP + ATP = dCDP + ADP. This is Cytidylate kinase from Streptomyces coelicolor (strain ATCC BAA-471 / A3(2) / M145).